We begin with the raw amino-acid sequence, 133 residues long: Large ribosomal subunit protein uL22 (133 aa).

It belongs to the universal ribosomal protein uL22 family. As to quaternary structure, part of the 50S ribosomal subunit.

In terms of biological role, this protein binds specifically to 23S rRNA; its binding is stimulated by other ribosomal proteins, e.g. L4, L17, and L20. It is important during the early stages of 50S assembly. It makes multiple contacts with different domains of the 23S rRNA in the assembled 50S subunit and ribosome. Its function is as follows. The globular domain of the protein is located near the polypeptide exit tunnel on the outside of the subunit, while an extended beta-hairpin is found that lines the wall of the exit tunnel in the center of the 70S ribosome. This is Large ribosomal subunit protein uL22 from Aquifex pyrophilus.